The sequence spans 237 residues: MTPKRALISLTSYHGPFYKDGAKTGVFVVEILRSFDTFEKHGFEVDFVSETGGFGWDEHYLPKSFIGGEDKMNFETKNSAFNKALARIKTANEVNASDYKIFFASAGHGALFDYPKAKNLQDIASKIYANGGVIAAICHGPLLFDGLIDIKTTRPLIEGKAITGFPLEGEIALGVDDILRSRKLTTVERVANKNRAKYLAPIHPWDDYSITDGKLVTGVNANSSYSTTIRAINALYS.

Residues Cys-138, His-139, and Glu-170 contribute to the active site.

This sequence belongs to the peptidase C56 family. HSP31-like subfamily. In terms of assembly, homodimer.

The protein localises to the cytoplasm. The protein resides in the P-body. It carries out the reaction methylglyoxal + H2O = (R)-lactate + H(+). Catalyzes the conversion of methylglyoxal (MG) to D-lactate in a single glutathione (GSH)-independent step. May play a role in detoxifying endogenously produced glyoxals. Involved in protection against reactive oxygen species (ROS). Important for viability in stationary phase. May negatively regulate TORC1 in response to nutrient limitation. This Saccharomyces cerevisiae (strain ATCC 204508 / S288c) (Baker's yeast) protein is Probable glutathione-independent glyoxalase SNO4.